We begin with the raw amino-acid sequence, 201 residues long: uncharacterized protein (201 aa).

Disordered regions lie at residues 46 to 80 and 143 to 201; these read PLVN…SYDE and SSTS…ANPA. Polar residues-rich tracts occupy residues 64 to 78 and 143 to 167; these read GSQN…SQSY and SSTS…NSPA.

This is an uncharacterized protein from Legionella pneumophila.